The following is a 390-amino-acid chain: Lipid-A-disaccharide synthase (390 aa).

It belongs to the LpxB family.

It carries out the reaction a lipid X + a UDP-2-N,3-O-bis[(3R)-3-hydroxyacyl]-alpha-D-glucosamine = a lipid A disaccharide + UDP + H(+). It functions in the pathway bacterial outer membrane biogenesis; LPS lipid A biosynthesis. Condensation of UDP-2,3-diacylglucosamine and 2,3-diacylglucosamine-1-phosphate to form lipid A disaccharide, a precursor of lipid A, a phosphorylated glycolipid that anchors the lipopolysaccharide to the outer membrane of the cell. In Neisseria gonorrhoeae (strain ATCC 700825 / FA 1090), this protein is Lipid-A-disaccharide synthase.